We begin with the raw amino-acid sequence, 51 residues long: Insulin (51 aa).

3 disulfides stabilise this stretch: C7/C37, C19/C50, and C36/C41.

The protein belongs to the insulin family. In terms of assembly, heterodimer of a B chain and an A chain linked by two disulfide bonds.

It is found in the secreted. In terms of biological role, insulin decreases blood glucose concentration. It increases cell permeability to monosaccharides, amino acids and fatty acids. It accelerates glycolysis, the pentose phosphate cycle, and glycogen synthesis in liver. This Acomys cahirinus (Cairo spiny mouse) protein is Insulin (INS).